A 115-amino-acid polypeptide reads, in one-letter code: T cell receptor beta variable 7-6 (115 aa).

Residues Met1–Ala21 form the signal peptide. One can recognise an Ig-like domain in the interval Gly22–Leu115. A disulfide bridge links Cys42 with Cys111.

In terms of assembly, alpha-beta TR is a heterodimer composed of an alpha and beta chain; disulfide-linked. The alpha-beta TR is associated with the transmembrane signaling CD3 coreceptor proteins to form the TR-CD3 (TcR or TCR). The assembly of alpha-beta TR heterodimers with CD3 occurs in the endoplasmic reticulum where a single alpha-beta TR heterodimer associates with one CD3D-CD3E heterodimer, one CD3G-CD3E heterodimer and one CD247 homodimer forming a stable octameric structure. CD3D-CD3E and CD3G-CD3E heterodimers preferentially associate with TR alpha and TR beta chains, respectively. The association of the CD247 homodimer is the last step of TcR assembly in the endoplasmic reticulum and is required for transport to the cell surface.

The protein resides in the cell membrane. Functionally, v region of the variable domain of T cell receptor (TR) beta chain that participates in the antigen recognition. Alpha-beta T cell receptors are antigen specific receptors which are essential to the immune response and are present on the cell surface of T lymphocytes. Recognize peptide-major histocompatibility (MH) (pMH) complexes that are displayed by antigen presenting cells (APC), a prerequisite for efficient T cell adaptive immunity against pathogens. Binding of alpha-beta TR to pMH complex initiates TR-CD3 clustering on the cell surface and intracellular activation of LCK that phosphorylates the ITAM motifs of CD3G, CD3D, CD3E and CD247 enabling the recruitment of ZAP70. In turn ZAP70 phosphorylates LAT, which recruits numerous signaling molecules to form the LAT signalosome. The LAT signalosome propagates signal branching to three major signaling pathways, the calcium, the mitogen-activated protein kinase (MAPK) kinase and the nuclear factor NF-kappa-B (NF-kB) pathways, leading to the mobilization of transcription factors that are critical for gene expression and essential for T cell growth and differentiation. The T cell repertoire is generated in the thymus, by V-(D)-J rearrangement. This repertoire is then shaped by intrathymic selection events to generate a peripheral T cell pool of self-MH restricted, non-autoaggressive T cells. Post-thymic interaction of alpha-beta TR with the pMH complexes shapes TR structural and functional avidity. The protein is T cell receptor beta variable 7-6 of Homo sapiens (Human).